Consider the following 326-residue polypeptide: Transformer-2 protein homolog (326 aa).

Disordered regions lie at residues 1-114 and 179-326; these read MEVA…PSNV and LHGK…SYRR. Residues 38 to 55 are compositionally biased toward basic and acidic residues; the sequence is RDSRERSPPRGNSRERSP. Positions 56 to 85 are enriched in low complexity; the sequence is PRGGSPNRGGSPNRGGSPNRGGSPNRGGSP. The span at 104–113 shows a compositional bias: polar residues; it reads RLANTASPSN. In terms of domain architecture, RRM spans 113–191; that stretch reads NVLGVFGLAP…KSIRTDFSAT (79 aa). Residues 220–239 are compositionally biased toward gly residues; that stretch reads YGGGDRYGRGDYGGRGGGGD. A compositionally biased stretch (basic and acidic residues) spans 240–326; sequence RYGRDDRGGD…DERPRDSYRR (87 aa).

It belongs to the splicing factor SR family.

The protein localises to the nucleus. Its function is as follows. Sequence-specific RNA-binding protein which participates in the control of pre-mRNA splicing. The chain is Transformer-2 protein homolog (tra2) from Dictyostelium discoideum (Social amoeba).